A 290-amino-acid polypeptide reads, in one-letter code: MPLLDYLASHPLAFVLCTILLGLLVGSFLNVVVHRLPKMMERNWKAEAREALGLEPEPKQATYNLVLPNSACPRCGHEIRPWENIPLVSYLALGGKCSSCKAAIGKRYPLVELATALLSGYVAWHFGFTWQAGAMLLLTWGLLAMSLIDADHQLLPDVLVLPLLWLGLIANHFGLFASLDDALFGAVFGYLSLWSVFWLFKLVTGKEGMGYGDFKLLAMLGAWGGWQILPLTILLSSLVGAILGVIMLRLRNAESGTPIPFGPYLAIAGWIALLWGDQITRTYLQFAGFK.

A helical transmembrane segment spans residues 13 to 33; that stretch reads AFVLCTILLGLLVGSFLNVVV. Cys-72, Cys-75, Cys-97, and Cys-100 together coordinate Zn(2+). The next 5 membrane-spanning stretches (helical) occupy residues 128 to 148, 158 to 178, 183 to 203, 228 to 248, and 261 to 276; these read FTWQ…MSLI, VLVL…LFAS, LFGA…FKLV, ILPL…VIML, and FGPY…LLWG.

This sequence belongs to the peptidase A24 family. Requires Zn(2+) as cofactor.

It is found in the cell inner membrane. The enzyme catalyses Typically cleaves a -Gly-|-Phe- bond to release an N-terminal, basic peptide of 5-8 residues from type IV prepilin, and then N-methylates the new N-terminal amino group, the methyl donor being S-adenosyl-L-methionine.. Its function is as follows. Plays an essential role in type IV pili and type II pseudopili formation by proteolytically removing the leader sequence from substrate proteins and subsequently monomethylating the alpha-amino group of the newly exposed N-terminal phenylalanine. Substrates include proteins required for pilus biogenesis PilE, PilV, PilW, and PilX as well as some components of the type II general secretory apparatus GspG, GspH, GspI and GspJ. This chain is Prepilin leader peptidase/N-methyltransferase (pilD), found in Pseudomonas aeruginosa (strain ATCC 15692 / DSM 22644 / CIP 104116 / JCM 14847 / LMG 12228 / 1C / PRS 101 / PAO1).